The chain runs to 251 residues: Spermatogenesis-associated protein 46 (251 aa).

It localises to the nucleus membrane. Plays a role in spermiogenesis and fertilization. This chain is Spermatogenesis-associated protein 46 (SPATA46), found in Macaca fascicularis (Crab-eating macaque).